The following is a 506-amino-acid chain: Glutamate--tRNA ligase (506 aa).

The short motif at 12-22 is the 'HIGH' region element; sequence PSPTGDPHVGT. The short motif at 253 to 257 is the 'KMSKS' region element; that stretch reads KLSKR. Residue Lys256 coordinates ATP.

The protein belongs to the class-I aminoacyl-tRNA synthetase family. Glutamate--tRNA ligase type 1 subfamily. Monomer.

The protein localises to the cytoplasm. It carries out the reaction tRNA(Glu) + L-glutamate + ATP = L-glutamyl-tRNA(Glu) + AMP + diphosphate. In terms of biological role, catalyzes the attachment of glutamate to tRNA(Glu) in a two-step reaction: glutamate is first activated by ATP to form Glu-AMP and then transferred to the acceptor end of tRNA(Glu). This Chlamydia muridarum (strain MoPn / Nigg) protein is Glutamate--tRNA ligase.